We begin with the raw amino-acid sequence, 705 residues long: Prolyl endopeptidase (705 aa).

The signal sequence occupies residues 1 to 20 (MKYKKLSVAVAAFAFAAVSA). Catalysis depends on charge relay system residues Ser-556 and His-675.

This sequence belongs to the peptidase S9A family. As to quaternary structure, monomer.

It is found in the periplasm. The enzyme catalyses Hydrolysis of Pro-|-Xaa &gt;&gt; Ala-|-Xaa in oligopeptides.. In terms of biological role, cleaves peptide bonds on the C-terminal side of prolyl residues within peptides that are up to approximately 30 amino acids long. Has an absolute requirement for an X-Pro bond in the trans configuration immediately preceding the Pro-Y scissible bond. The polypeptide is Prolyl endopeptidase (Elizabethkingia miricola (Chryseobacterium miricola)).